The sequence spans 295 residues: Non-selective voltage-gated ion channel VDAC2 (295 aa).

Residues lysine 24 and lysine 32 each contribute to the ATP site. Lysine 32 bears the N6-acetyllysine; alternate mark. Lysine 32 is subject to N6-succinyllysine; alternate. A Glycyl lysine isopeptide (Lys-Gly) (interchain with G-Cter in ubiquitin); alternate cross-link involves residue lysine 32. 2 beta stranded membrane passes run 38-47 and 51-59; these read LVKLDVKTKS and VEFSTSGSS. Lysine 65 participates in a covalent cross-link: Glycyl lysine isopeptide (Lys-Gly) (interchain with G-Cter in ubiquitin). Residues 66-76 form a beta stranded membrane-spanning segment; sequence VSGTLETKYKW. Position 79 is a phosphotyrosine (tyrosine 79). 3 beta stranded membrane-spanning segments follow: residues 81-88, 92-101, and 107-116; these read LTFTEKWN, TLGTEIAIED, and LKLTFDTTFS. Threonine 119 is modified (phosphothreonine). Lysine 121 is subject to N6-acetyllysine; alternate. Lysine 121 participates in a covalent cross-link: Glycyl lysine isopeptide (Lys-Gly) (interchain with G-Cter in ubiquitin); alternate. A Glycyl lysine isopeptide (Lys-Gly) (interchain with G-Cter in ubiquitin) cross-link involves residue lysine 122. 4 beta stranded membrane-spanning segments follow: residues 123–132, 135–142, 149–157, and 162–170; these read SGKIKSAYKR, INLGCDVD, AIHGSAVFG, and LAGYQMTFD. Lysine 173 participates in a covalent cross-link: Glycyl lysine isopeptide (Lys-Gly) (interchain with G-Cter in ubiquitin). The next 6 membrane-spanning stretches (beta stranded) occupy residues 175–187, 190–197, 201–210, 214–223, 230–239, and 243–250; these read KLTR…GYRT, FQLHTNVN, EFGGSIYQKV, FDTSVNLAWT, RFGIAAKYQL, and ASISAKVN. Tyrosine 237 is subject to Phosphotyrosine. Serine 252 carries the post-translational modification Phosphoserine. NAD(+) contacts are provided by residues 254-256 and 272-276; these read LIG and SALVD. The next 2 beta stranded transmembrane spans lie at 254–263 and 266–275; these read LIGVGYTQTL and GVKLTLSALV. Lysine 278 is subject to N6-acetyllysine; alternate. A Glycyl lysine isopeptide (Lys-Gly) (interchain with G-Cter in ubiquitin); alternate cross-link involves residue lysine 278. The beta stranded transmembrane segment at 285–294 threads the bilayer; it reads HKLGLALELE.

The protein belongs to the eukaryotic mitochondrial porin family. In terms of assembly, monomer, homodimer and higher order oligomers; formation of higher order structures is necessary for scramblase activity. Interacts with ARMC12 in a TBC1D21-dependent manner. Interacts with KLC3. Interacts with SPATA33. Interacts with PPP3CC in a SPATA33-dependent manner. In terms of processing, ubiquitinated by PRKN during mitophagy, leading to its degradation and enhancement of mitophagy. Deubiquitinated by USP30. As to expression, highly expressed in heart, kidney, brain and ascitic tumor with very low levels in liver. Expressed in the head region of epididymal sperm.

The protein resides in the mitochondrion outer membrane. It localises to the membrane. It catalyses the reaction chloride(in) = chloride(out). It carries out the reaction K(+)(in) = K(+)(out). The enzyme catalyses a 1,2-diacyl-sn-glycero-3-phospho-L-serine(in) = a 1,2-diacyl-sn-glycero-3-phospho-L-serine(out). The catalysed reaction is a 1,2-diacyl-sn-glycero-3-phosphocholine(in) = a 1,2-diacyl-sn-glycero-3-phosphocholine(out). It catalyses the reaction a 1,2-diacyl-sn-glycero-3-phospho-(1D-myo-inositol)(in) = a 1,2-diacyl-sn-glycero-3-phospho-(1D-myo-inositol)(out). Its function is as follows. Non-selective voltage-gated ion channel that mediates the transport of anions and cations through the mitochondrion outer membrane and plasma membrane. The channel adopts an open conformation at zero mV and a closed conformation at both positive and negative potentials. There are two populations of channels; the main that functions in a lower open-state conductance with lower ion selectivity, that switch, in a voltage-dependent manner, from the open to a low-conducting 'closed' state and the other that has a normal ion selectivity in the typical high conductance, 'open' state. Binds various lipids, including the sphingolipid ceramide, the phospholipid phosphatidylcholine, and the sterols cholesterol and oxysterol. Binding of ceramide promotes the mitochondrial outer membrane permeabilization (MOMP) apoptotic pathway. Catalyzes the scrambling of phospholipids across the outer mitochondrial membrane; the mechanism is unrelated to channel activity and is capable of translocating both anionic and zwitterionic phospholipids. This Rattus norvegicus (Rat) protein is Non-selective voltage-gated ion channel VDAC2.